The chain runs to 266 residues: MDTFQVIILALIQGLTEFLPISSSAHLILPAQLLGWEDQGLSFDVAVNTGSLFAVVIYFRHELWTMFNAWIASIFRGQQSEDSKLAWWIILATLPAVFFGFLAKDFIATHLRNAEVIAVTTVVFGLLLWWADKMSRRDLTVYQTGWRKALLIGFAQALALIPGTSRSGATMTAALMLGLSRDAAARFSFLMSVPVSLGAAILVGKDLAKSELPIDYQALILGTLISFVAAYACIHYFLKIISRMGMTPFVIYRLALGAVLCGFIFF.

The next 8 helical transmembrane spans lie at 1–21, 39–59, 87–107, 114–134, 149–169, 183–203, 218–238, and 246–266; these read MDTF…FLPI, QGLS…VIYF, WWII…KDFI, AEVI…ADKM, ALLI…RSGA, AAAR…AILV, ALIL…HYFL, and MTPF…FIFF.

This sequence belongs to the UppP family.

The protein localises to the cell inner membrane. It carries out the reaction di-trans,octa-cis-undecaprenyl diphosphate + H2O = di-trans,octa-cis-undecaprenyl phosphate + phosphate + H(+). Functionally, catalyzes the dephosphorylation of undecaprenyl diphosphate (UPP). Confers resistance to bacitracin. The sequence is that of Undecaprenyl-diphosphatase from Shewanella baltica (strain OS223).